Reading from the N-terminus, the 355-residue chain is Peptide chain release factor 1 (355 aa).

Q231 is subject to N5-methylglutamine. Residues 283–303 are disordered; it reads NAQNKEARKTQVGSGDRSERI.

The protein belongs to the prokaryotic/mitochondrial release factor family. In terms of processing, methylated by PrmC. Methylation increases the termination efficiency of RF1.

Its subcellular location is the cytoplasm. Peptide chain release factor 1 directs the termination of translation in response to the peptide chain termination codons UAG and UAA. The polypeptide is Peptide chain release factor 1 (Helicobacter hepaticus (strain ATCC 51449 / 3B1)).